A 560-amino-acid polypeptide reads, in one-letter code: NAD(P)H-quinone oxidoreductase chain 4-3 (560 aa).

A run of 14 helical transmembrane segments spans residues 5–25, 35–55, 86–106, 114–134, 135–155, 168–188, 208–228, 242–262, 273–293, 310–330, 331–351, 374–394, 417–437, and 488–508; these read FPWL…IPLL, WYAL…FWHH, ISMP…LAAW, LFYF…VAQD, LLLF…LVSI, FLLY…AMAL, ALEL…LAIF, SAPV…YGLI, HIYF…YGGL, VSHM…GVSG, AMLQ…LAGV, VFAL…MSGF, VMVF…LSML, and VFIA…PKIA.

This sequence belongs to the complex I subunit 4 family.

It localises to the cellular thylakoid membrane. It catalyses the reaction a plastoquinone + NADH + (n+1) H(+)(in) = a plastoquinol + NAD(+) + n H(+)(out). It carries out the reaction a plastoquinone + NADPH + (n+1) H(+)(in) = a plastoquinol + NADP(+) + n H(+)(out). In terms of biological role, NDH-1 shuttles electrons from NAD(P)H, via FMN and iron-sulfur (Fe-S) centers, to quinones in the respiratory chain. The immediate electron acceptor for the enzyme in this species is believed to be plastoquinone. Couples the redox reaction to proton translocation (for every two electrons transferred, four hydrogen ions are translocated across the cytoplasmic membrane), and thus conserves the redox energy in a proton gradient. The sequence is that of NAD(P)H-quinone oxidoreductase chain 4-3 (ndhD3) from Nostoc sp. (strain PCC 7120 / SAG 25.82 / UTEX 2576).